A 177-amino-acid polypeptide reads, in one-letter code: Large ribosomal subunit protein uL6 (177 aa).

It belongs to the universal ribosomal protein uL6 family. As to quaternary structure, part of the 50S ribosomal subunit.

Functionally, this protein binds to the 23S rRNA, and is important in its secondary structure. It is located near the subunit interface in the base of the L7/L12 stalk, and near the tRNA binding site of the peptidyltransferase center. The sequence is that of Large ribosomal subunit protein uL6 from Methylibium petroleiphilum (strain ATCC BAA-1232 / LMG 22953 / PM1).